We begin with the raw amino-acid sequence, 1389 residues long: MKKELTDLFKNSEVSEAQNFNSIKITLASPEKIKSWTYGEIKKPETINYRTFRPEKDGLFCARIFGPIKDYECLCGKYKRMKFRGIICEKCGVEVTKSNVRRERMGHINLATPVAHIWFLKSLPSRISLAVDMKLKEVERVLYFENFIVIEPGLTGLQKNQLLNEEELAKYQDEFGEESFEAGIGAEAILSILKSMDLELERKLLINTIKETKSKVNEERSIKRLKLIESFIETGQKPEWMILTVIPVIPPELRPLVPLDGGRFATSDLNDLYRRVINRNNRLKRLMDLKAPDIIVRNEKRMLQESVDALFDNGRRGRVITGTGKRPLKSLAEMLKGKQGRFRQNLLGKRVDYSGRSVIVVGPDLKLHECGLPKKMALELFKPFLYARLNKLGLASTIKQAKKLVEKETNAVWDALELIVREHPVLLNRAPTLHRLGVQAFEPKLIEGDAIELHPLCCAAFNADFDGDQMAVHVPLSLEAQLEARILMLSTNNILSPSNGKPIIVPSQDMILGLYYLSQAPFQTEKPDGYFINNDEIEHALSTGQIKVHSTIVSRFETLDEKGNKRVEKHTTTAGRFLLANLLPKHKDITFSMIDRLLPKKTVSEIIDSVFRFCGQKTTVIFCDHLKDLGFKHAFKAGISFGKDDLVIPANKGQLIEDTKKLIADYENQYSEGLITRGEKYNKVVDAWSKCTDKVAGEMMRGISATESTPDGMKINSVFMMADSGARGSAAQMKQLAGMRGLIAKPSGEIIETPIISNFKEGLTALEYFNSTHGARKGLADTALKTASSGYLTRRLCDVAQDLTISKIKCDNPGFIELAEILEGGNVVVSLSERALGRVTAFDVKNPITGEVVIKKETMIDEAGCDKIDAAGVKFIKAYSVMTCSSKLGVCATCYGRDLSRGKMVHVGEAIGMISAQSIGEPGTQLTMRTFHVGGTASVKQESQIVTKTAGTLKIINSNLLEDSKKNLIVMGRNTQLSIEDNNGVQVAVYKVAYGSKLFFQNGDKVKANEKICEWDPYTTPVIAEKSGIAGYVDLIDGVSIQETTDDATGISSKSVIDWRAQSKNTDLKPRITLRDDKGNVIKKADDNEARYYLVPDSILSVKDGQKIFAGDIIARLPKETTKTKDITGGLPRVAELFEARKAKDSAIIAENDGQVLFGKEVRGKQRISIQPDNGEPSNYLIPKGKHINFNQGEKIKKGEYLLDGQPLPHDILRILGIKDLTEYFVNQVQEVYRLQGVIINDKHIETILRQMLKKVEIKESGDSSYLPGEMIDRIKFDNTNEKLVAEGKNPASGERVLMGITKASLQTESFISAASFQETTRVLTDAAIKGKVDPLNGLKENVIVGRLVPAGTGHIKNKWNKNAIDADNKFLAEQEKIEPLETTETPAN.

Zn(2+)-binding residues include cysteine 73, cysteine 75, cysteine 88, and cysteine 91. Residues aspartate 464, aspartate 466, and aspartate 468 each coordinate Mg(2+). Zn(2+) is bound by residues cysteine 810, cysteine 884, cysteine 891, and cysteine 894.

The protein belongs to the RNA polymerase beta' chain family. The RNAP catalytic core consists of 2 alpha, 1 beta, 1 beta' and 1 omega subunit. When a sigma factor is associated with the core the holoenzyme is formed, which can initiate transcription. It depends on Mg(2+) as a cofactor. Zn(2+) serves as cofactor.

It carries out the reaction RNA(n) + a ribonucleoside 5'-triphosphate = RNA(n+1) + diphosphate. Functionally, DNA-dependent RNA polymerase catalyzes the transcription of DNA into RNA using the four ribonucleoside triphosphates as substrates. This chain is DNA-directed RNA polymerase subunit beta', found in Pelagibacter ubique (strain HTCC1062).